A 364-amino-acid polypeptide reads, in one-letter code: AYEKAVKGYITKRKPLGEALDEEIMDELSVKFGIVDDALEDLFKQIQDAGISIVDKDGNPSPLALVTDEIEKEEVSDTAMDEIVTNVRIDDPVRMYLKEIGRYPLISLDEETKLAEAIIAGGEGAEFAKQMLAEANLRLVVSIAKRYSGRGMQFLDLIQEGNMGLMKAVDKFDQTKGFKFSTYATWWIRQAITRAIADQARTIRIPVHMVETINKLIRVQRNLLQELGRDPSPEEIGKELHMAPDKVREVLKIAQEPVSLETPIGEEDDSHLGDFIEDDVIESPVDYTNRILLREQLDEVMDTLTDREENVLRMRFGLDDGRMHTLEDVGKQFKVTRERIRQIEAKAIKKLRHPRRSKPLRDFM.

Positions 132–202 (LAEANLRLVV…TRAIADQART (71 aa)) are sigma-70 factor domain-2. Positions 156–159 (DLIQ) match the Interaction with polymerase core subunit RpoC motif. Residues 211–287 (ETINKLIRVQ…DDVIESPVDY (77 aa)) are sigma-70 factor domain-3. Residues 300-353 (VMDTLTDREENVLRMRFGLDDGRMHTLEDVGKQFKVTRERIRQIEAKAIKKLRH) are sigma-70 factor domain-4. Residues 326-345 (LEDVGKQFKVTRERIRQIEA) constitute a DNA-binding region (H-T-H motif).

The protein belongs to the sigma-70 factor family. RpoD/SigA subfamily. Interacts transiently with the RNA polymerase catalytic core.

The protein localises to the cytoplasm. Functionally, sigma factors are initiation factors that promote the attachment of RNA polymerase to specific initiation sites and are then released. This sigma factor is the primary sigma factor during exponential growth. This is RNA polymerase sigma factor SigA from Lactococcus lactis subsp. cremoris (Streptococcus cremoris).